A 332-amino-acid polypeptide reads, in one-letter code: Phenol 2-monooxygenase, oxygenase component MhpL (332 aa).

The protein belongs to the TmoE/XamoE family.

It catalyses the reaction phenol + NADH + O2 + H(+) = catechol + NAD(+) + H2O. The protein operates within aromatic compound metabolism; phenol degradation. In terms of biological role, part of a multicomponent enzyme which catalyzes the degradation of phenol and some of its methylated derivatives. This chain is Phenol 2-monooxygenase, oxygenase component MhpL (mphL), found in Acinetobacter pittii (strain PHEA-2).